A 513-amino-acid polypeptide reads, in one-letter code: Interferon-induced, double-stranded RNA-activated protein kinase (513 aa).

The residue at position 2 (Ala-2) is an N-acetylalanine. The region spanning 8–76 (FYVDKLNKYS…AKLAVEILDN (69 aa)) is the DRBM 1 domain. Lys-68 participates in a covalent cross-link: Glycyl lysine isopeptide (Lys-Gly) (interchain with G-Cter in ISG15). Ser-82 is modified (phosphoserine). Thr-84 carries the post-translational modification Phosphothreonine. One can recognise a DRBM 2 domain in the interval 95–162 (NYIGLVNSFA…AKNAYQKLSE (68 aa)). At Tyr-96 the chain carries Phosphotyrosine; by autocatalysis. Lys-154 is covalently cross-linked (Glycyl lysine isopeptide (Lys-Gly) (interchain with G-Cter in ISG15)). Tyr-157 carries the post-translational modification Phosphotyrosine; by autocatalysis. Phosphothreonine is present on Thr-227. The segment at 235 to 513 (DFEDIEEIGS…ISEKKKRNTC (279 aa)) is interaction with TRAF5. The Protein kinase domain occupies 236-502 (FEDIEEIGSG…EILKTLAEWK (267 aa)). 242-250 (IGSGGFGQV) provides a ligand contact to ATP. Position 262 is a phosphotyrosine; by autocatalysis (Tyr-262). Lys-265 is a binding site for ATP. Asp-373 (proton acceptor) is an active-site residue. Phosphothreonine; by autocatalysis is present on residues Thr-406 and Thr-411. Residue Ser-416 is modified to Phosphoserine.

The protein belongs to the protein kinase superfamily. Ser/Thr protein kinase family. GCN2 subfamily. As to quaternary structure, homodimer. Interacts with DNAJC3. Interacts with STRBP. Forms a complex with FANCA, FANCC, FANCG and HSP70. Interacts with ADAR/ADAR1. The inactive form interacts with NCK1 and GSN. Interacts (via the kinase catalytic domain) with STAT3 (via SH2 domain), TRAF2 (C-terminus), TRAF5 (C-terminus) and TRAF6 (C-terminus). Interacts with MAP2K6, IKBKB/IKKB, IRS1, NPM1, TARBP2, NLRP1, NLRP3, NLRC4 and AIM2. Interacts (via DRBM 1 domain) with DUS2L (via DRBM domain). Interacts with DHX9 (via N-terminus) and this interaction is dependent upon activation of the kinase. In terms of processing, autophosphorylated on several Ser, Thr and Tyr residues. Autophosphorylation of Thr-411 is dependent on Thr-406 and is stimulated by dsRNA binding and dimerization. Autophosphorylation apparently leads to the activation of the kinase. Tyrosine autophosphorylation is essential for efficient dsRNA-binding, dimerization, and kinase activation.

The protein resides in the cytoplasm. It localises to the nucleus. Its subcellular location is the perinuclear region. The catalysed reaction is L-seryl-[protein] + ATP = O-phospho-L-seryl-[protein] + ADP + H(+). It carries out the reaction L-threonyl-[protein] + ATP = O-phospho-L-threonyl-[protein] + ADP + H(+). The enzyme catalyses L-tyrosyl-[protein] + ATP = O-phospho-L-tyrosyl-[protein] + ADP + H(+). With respect to regulation, initially produced in an inactive form and is activated by binding to viral dsRNA, which causes dimerization and autophosphorylation in the activation loop and stimulation of function. ISGylation can activate it in the absence of viral infection. Can also be activated by heparin, pro-inflammatory stimuli, growth factors, cytokines, oxidative stress and the cellular protein PRKRA. Activity is markedly stimulated by manganese ions. Activation is blocked by the cellular proteins TARBP2, DUS2L, NPM1, NCK1 and ADAR. Its function is as follows. IFN-induced dsRNA-dependent serine/threonine-protein kinase that phosphorylates the alpha subunit of eukaryotic translation initiation factor 2 (EIF2S1/eIF-2-alpha) and plays a key role in the innate immune response to viral infection. Inhibits viral replication via the integrated stress response (ISR): EIF2S1/eIF-2-alpha phosphorylation in response to viral infection converts EIF2S1/eIF-2-alpha in a global protein synthesis inhibitor, resulting to a shutdown of cellular and viral protein synthesis, while concomitantly initiating the preferential translation of ISR-specific mRNAs, such as the transcriptional activator ATF4. Exerts its antiviral activity on a wide range of DNA and RNA viruses. Also involved in the regulation of signal transduction, apoptosis, cell proliferation and differentiation: phosphorylates other substrates including p53/TP53, PPP2R5A, DHX9, ILF3 and IRS1. In addition to serine/threonine-protein kinase activity, also has tyrosine-protein kinase activity and phosphorylates CDK1 at 'Tyr-4' upon DNA damage, facilitating its ubiquitination and proteasomal degradation. Either as an adapter protein and/or via its kinase activity, can regulate various signaling pathways (p38 MAP kinase, NF-kappa-B and insulin signaling pathways) and transcription factors (JUN, STAT1, STAT3, IRF1, ATF3) involved in the expression of genes encoding pro-inflammatory cytokines and IFNs. Activates the NF-kappa-B pathway via interaction with IKBKB and TRAF family of proteins and activates the p38 MAP kinase pathway via interaction with MAP2K6. Can act as both a positive and negative regulator of the insulin signaling pathway (ISP). Negatively regulates ISP by inducing the inhibitory phosphorylation of insulin receptor substrate 1 (IRS1) at 'Ser-312' and positively regulates ISP via phosphorylation of PPP2R5A which activates FOXO1, which in turn up-regulates the expression of insulin receptor substrate 2 (IRS2). Can regulate NLRP3 inflammasome assembly and the activation of NLRP3, NLRP1, AIM2 and NLRC4 inflammasomes. Plays a role in the regulation of the cytoskeleton by binding to gelsolin (GSN), sequestering the protein in an inactive conformation away from actin. This is Interferon-induced, double-stranded RNA-activated protein kinase (Eif2ak2) from Rattus norvegicus (Rat).